The primary structure comprises 344 residues: tRNA N6-adenosine threonylcarbamoyltransferase (344 aa).

Residues His114 and His118 each contribute to the Fe cation site. Residues Leu136–Gly140, Asp170, Gly183, Asp187, and Asn278 contribute to the substrate site. Residue Asp306 participates in Fe cation binding.

This sequence belongs to the KAE1 / TsaD family. Fe(2+) is required as a cofactor.

It localises to the cytoplasm. The catalysed reaction is L-threonylcarbamoyladenylate + adenosine(37) in tRNA = N(6)-L-threonylcarbamoyladenosine(37) in tRNA + AMP + H(+). In terms of biological role, required for the formation of a threonylcarbamoyl group on adenosine at position 37 (t(6)A37) in tRNAs that read codons beginning with adenine. Is involved in the transfer of the threonylcarbamoyl moiety of threonylcarbamoyl-AMP (TC-AMP) to the N6 group of A37, together with TsaE and TsaB. TsaD likely plays a direct catalytic role in this reaction. This Mycobacteroides abscessus (strain ATCC 19977 / DSM 44196 / CCUG 20993 / CIP 104536 / JCM 13569 / NCTC 13031 / TMC 1543 / L948) (Mycobacterium abscessus) protein is tRNA N6-adenosine threonylcarbamoyltransferase.